A 714-amino-acid chain; its full sequence is MSMSYRALKFRRHAPTSTQHHPKEDMNFHQQPPGLPGPALGQTMSPPPWQMGESNPDFLPNNFNQLNLDPQQPEADGGQQRSKGSENNLYRKYEEKVRPCIDLIDSLRALGVEQDLALPAIAVIGDQSSGKSSVLEALSGVALPRGSGIITRCPLVLKLTKRECEWTGKITYRNVTQQLHNPSEVEREIRRAQNIIAGNGVGISHELINLEVTSPEVPDLTLIDLPGITRVAVENQPQDIGLQIKALIKTYIQRQETINLVVVPCNVDIATTEALSMAQEVDPDGDRTIGILTKPDLVDKGTEKGVLKVMQNLTYHLKKGYMIVKCRGQQDITNKLSLAEATRKEVMFFQTHPYFRVLLDEGKATVPLLAERLTTELIWHINKSLPLLENQIKEKHQRATEELQQYGDDIPSNEGDKMFFLIEKIKLFNEDIEKLIEGEEIVIETESRLCNRIREEFTRWVLILTTNIEKVKSILNEEVSKYETKYRGKELLGFVNYKTFETVVKHYLGQLIDPALKMLQKAMEIIWQTFKDTAKKHFAEFCNLHQTVQNKIEDIKTKQMAEAANLIQLQFRMEKLVFCQDQIYGVVLNKVREEIFNSVGKASENPQSKHPFLNNQSSVSSIVEIGVHLNAYFTETSKRLANQIPFIIQYFMLQENGDKVQKAMMQLLQETQHYSWLLQEQSDTATKRKFLKEKIFRLTQAQQALYEFPHFKSI.

Positions 1 to 89 are disordered; it reads MSMSYRALKF…QRSKGSENNL (89 aa). Polar residues-rich tracts occupy residues 61–70 and 79–88; these read NNFNQLNLDP and QQRSKGSENN. The Dynamin-type G domain maps to 115–386; it reads DLALPAIAVI…LIWHINKSLP (272 aa). The tract at residues 125–132 is G1 motif; sequence GDQSSGKS. A GTP-binding site is contributed by 125-132; that stretch reads GDQSSGKS. A G2 motif region spans residues 150–152; sequence ITR. Residues 224–227 form a G3 motif region; sequence DLPG. Residues 224 to 228 and 293 to 296 each bind GTP; these read DLPGI and TKPD. The tract at residues 293-296 is G4 motif; the sequence is TKPD. The segment at 325–328 is G5 motif; it reads KCRG. The 92-residue stretch at 622 to 713 folds into the GED domain; that stretch reads IVEIGVHLNA…ALYEFPHFKS (92 aa).

Belongs to the TRAFAC class dynamin-like GTPase superfamily. Dynamin/Fzo/YdjA family.

Its subcellular location is the cytoplasm. The protein resides in the nucleus. Interferon-induced dynamin-like GTPase with antiviral activity. The protein is Interferon-induced GTP-binding protein Mx2 (MX2) of Ovis aries (Sheep).